The sequence spans 196 residues: Recombination protein RecR (196 aa).

The C4-type zinc-finger motif lies at 56-71; it reads CPVCGGLDSQQPCMIC. One can recognise a Toprim domain in the interval 78–172; the sequence is PLICVVETVA…SVTRLAQGVP (95 aa).

Belongs to the RecR family.

May play a role in DNA repair. It seems to be involved in an RecBC-independent recombinational process of DNA repair. It may act with RecF and RecO. In Acidiphilium cryptum (strain JF-5), this protein is Recombination protein RecR.